The following is a 197-amino-acid chain: Putative phosphopantothenoylcysteine decarboxylase (197 aa).

FMN contacts are provided by residues phenylalanine 52 and 102-105; that span reads SANT. Position 139 (asparagine 139) interacts with substrate. The active-site Proton donor is cysteine 174.

This sequence belongs to the HFCD (homooligomeric flavin containing Cys decarboxylase) superfamily. Homotrimer. FMN is required as a cofactor.

The catalysed reaction is N-[(R)-4-phosphopantothenoyl]-L-cysteine + H(+) = (R)-4'-phosphopantetheine + CO2. Its pathway is cofactor biosynthesis; coenzyme A biosynthesis; CoA from (R)-pantothenate: step 3/5. Its function is as follows. Necessary for the biosynthesis of coenzyme A. Catalyzes the decarboxylation of 4-phosphopantothenoylcysteine to form 4'-phosphopantotheine. This is Putative phosphopantothenoylcysteine decarboxylase (ppcdc) from Dictyostelium discoideum (Social amoeba).